The sequence spans 799 residues: Protein-lysine N-methyltransferase SMYD4 (799 aa).

Residue 112–114 coordinates S-adenosyl-L-methionine; that stretch reads RSA. One can recognise an SET domain in the interval 233–570; it reads LSVSLCTHPL…KGQEILHCYG (338 aa). Residues C296, C299, C309, C312, C318, C322, H331, and C335 each coordinate Zn(2+). The MYND-type zinc finger occupies 296–335; the sequence is CHRCLKHTLATVPCGSCSYAKYCSQECMQQAWDLYHSTEC. S-adenosyl-L-methionine is bound by residues 535 to 536, Y569, and F591; that span reads NH.

It belongs to the class V-like SAM-binding methyltransferase superfamily. Interacts (via MYND-type zinc finger) with HDAC1.

It localises to the nucleus. The protein localises to the cytoplasm. It carries out the reaction L-lysyl-[protein] + S-adenosyl-L-methionine = N(6)-methyl-L-lysyl-[protein] + S-adenosyl-L-homocysteine + H(+). Its function is as follows. Protein-lysine N-methyltransferase. Monomethylates PRMT5, modulating its transcriptional activity. May also act as a histone methyltransferase. Plays a critical role in cardiac development. Acts as a key epigenetic regulator of gene expression during cardiac development via its dual activities as a methyltransferase and negative regulator of HDAC1. This chain is Protein-lysine N-methyltransferase SMYD4 (Smyd4), found in Mus musculus (Mouse).